A 763-amino-acid polypeptide reads, in one-letter code: MSELLSVALFLASVLIYAWKAGRNTWWFAATLTVLGLFVILNITLYASDYFTGDGINDAVLYTLTNSLTGAGVGKYILPGIGIALALVAVFGALGWILRRRRHHPHHVGYSLLALLLALGSVDASPAFRQITELVKSQMRDGDPDFAVYYKEPAKTIPNPKLNLVYIYGESLERTYFDNDAFPNLTPELGALKNEGLDFSHTMQLPGTDYTIAGMVASQCGIPLFAPFEGNASASVSSFFPQNICLGDILKNSGYQNYFVQGANLRFAGKDVFLKSHGFDHLYGAEELKTVVADPSYRNDWGFYDDTVLDEAWKKFEALSRSGQRFSLFTLTVDTHHPDGFISRTCNRKRYDYDGKPNQSFSAVSCSQENIAEFINKIKASPWFKDTVIVVSSDHLAMNNTAWKYLNKQDRNNLFFILRGDKPQQETLAVKRNTMDNGATVLDILGGDNFIGLGRSSLSGQSLSEVFLNVKEKVLAMKPDIIRLWNFPKEIKDFTVDRDKNMIAFSGSHFRLPLLLRVSDKRVEPLPESEYSAPLRFQLADFAPRDNFVWIDRCYKMAQLWAPALALSTDWCVSQGQLGGQQTVQHVDKAQWKGKTAFKETVIDVTRYQGNVDTLKIVDNDIRYKADSFIFNVAGAPEEVKQFSGISRPESWGRWSNAQLGDEVKIEYKAPLPKKFDLVITAKAFGDNANRPIPVRVGNEEQTLVLGHDVSTITLHFNNPTDANTLVIAPPAPVSTNEGNILGHSPRKLGIGMVEIKVVNVES.

The next 4 helical transmembrane spans lie at 1-21 (MSELLSVALFLASVLIYAWKA), 26-46 (WWFAATLTVLGLFVILNITLY), 77-97 (ILPGIGIALALVAVFGALGWI), and 108-128 (VGYSLLALLLALGSVDASPAF).

Belongs to the OpgB family.

It is found in the cell inner membrane. The catalysed reaction is a phosphatidylglycerol + a membrane-derived-oligosaccharide D-glucose = a 1,2-diacyl-sn-glycerol + a membrane-derived-oligosaccharide 6-(glycerophospho)-D-glucose.. It participates in glycan metabolism; osmoregulated periplasmic glucan (OPG) biosynthesis. In terms of biological role, transfers a phosphoglycerol residue from phosphatidylglycerol to the membrane-bound nascent glucan backbones. This is Phosphoglycerol transferase I from Salmonella paratyphi B (strain ATCC BAA-1250 / SPB7).